Here is a 282-residue protein sequence, read N- to C-terminus: MPKRKAAGQGDMRQEPKRRSARLSAMLVPVTPEVKPKRTSSSRKMKTKSDMMEENIDTSAQAVAETKQEAVVEEDYNENAKNGEAKITEAPASEKEIVEVKEENIEDATEKGGEKKEAVAAEVKNEEEDQKEDEEDQNEEKGEAGKEDKDEKGEEDGKEDKNGNEKGEDAKEKEDGKKGEDGKGNGEDGKEKGEDEKEEEDRKETGDGKENEDGKEKGDKKEGKDVKVKEDEKEREDGKEDEGGNEEEAGKEKEDLKEEEEGKEEDEIKEDDGKKEEPQSIV.

Residues 1–282 (MPKRKAAGQG…GKKEEPQSIV (282 aa)) form a disordered region. Thr-31 is modified (phosphothreonine). Over residues 37–46 (KRTSSSRKMK) the composition is skewed to basic residues. Lys-67 participates in a covalent cross-link: Glycyl lysine isopeptide (Lys-Gly) (interchain with G-Cter in SUMO2). The residue at position 76 (Tyr-76) is a Phosphotyrosine. The span at 81–119 (KNGEAKITEAPASEKEIVEVKEENIEDATEKGGEKKEAV) shows a compositional bias: basic and acidic residues. At Ser-93 the chain carries Phosphoserine. A Glycyl lysine isopeptide (Lys-Gly) (interchain with G-Cter in SUMO1); alternate cross-link involves residue Lys-101. Lys-101 participates in a covalent cross-link: Glycyl lysine isopeptide (Lys-Gly) (interchain with G-Cter in SUMO2); alternate. Lys-124 is covalently cross-linked (Glycyl lysine isopeptide (Lys-Gly) (interchain with G-Cter in SUMO2)). Residues 125–138 (NEEEDQKEDEEDQN) are compositionally biased toward acidic residues. Basic and acidic residues-rich tracts occupy residues 139–152 (EEKG…KDEK) and 158–256 (KEDK…KEDL). Residues 257-270 (KEEEEGKEEDEIKE) are compositionally biased toward acidic residues. The span at 271-282 (DDGKKEEPQSIV) shows a compositional bias: basic and acidic residues.

It belongs to the HMGN family. In terms of tissue distribution, ubiquitously expressed.

It is found in the nucleus. In terms of biological role, preferentially binds to euchromatin and modulates cellular transcription by counteracting linker histone-mediated chromatin compaction. The polypeptide is High mobility group nucleosome-binding domain-containing protein 5 (HMGN5) (Homo sapiens (Human)).